Consider the following 149-residue polypeptide: 3-hydroxyacyl-[acyl-carrier-protein] dehydratase FabZ (149 aa).

Residue His53 is part of the active site.

Belongs to the thioester dehydratase family. FabZ subfamily.

The protein resides in the cytoplasm. It carries out the reaction a (3R)-hydroxyacyl-[ACP] = a (2E)-enoyl-[ACP] + H2O. Involved in unsaturated fatty acids biosynthesis. Catalyzes the dehydration of short chain beta-hydroxyacyl-ACPs and long chain saturated and unsaturated beta-hydroxyacyl-ACPs. This chain is 3-hydroxyacyl-[acyl-carrier-protein] dehydratase FabZ, found in Neisseria meningitidis serogroup C / serotype 2a (strain ATCC 700532 / DSM 15464 / FAM18).